The sequence spans 374 residues: tRNA-specific 2-thiouridylase MnmA (374 aa).

ATP contacts are provided by residues 17–24 (GMSGGVDS) and Met43. Residues 103-105 (NPD) form an interaction with target base in tRNA region. Cys108 functions as the Nucleophile in the catalytic mechanism. Cysteines 108 and 204 form a disulfide. Gly132 provides a ligand contact to ATP. An interaction with tRNA region spans residues 154-156 (KDQ). Cys204 acts as the Cysteine persulfide intermediate in catalysis. The segment at 316-317 (RY) is interaction with tRNA.

It belongs to the MnmA/TRMU family.

The protein localises to the cytoplasm. It catalyses the reaction S-sulfanyl-L-cysteinyl-[protein] + uridine(34) in tRNA + AH2 + ATP = 2-thiouridine(34) in tRNA + L-cysteinyl-[protein] + A + AMP + diphosphate + H(+). Catalyzes the 2-thiolation of uridine at the wobble position (U34) of tRNA, leading to the formation of s(2)U34. The polypeptide is tRNA-specific 2-thiouridylase MnmA (Pseudomonas entomophila (strain L48)).